The primary structure comprises 206 residues: Large ribosomal subunit protein uL4 (206 aa).

The disordered stretch occupies residues 47-76 (GTQSAKTRAEVSGGGIKPWRQKGTGRARQG).

The protein belongs to the universal ribosomal protein uL4 family. Part of the 50S ribosomal subunit.

Functionally, one of the primary rRNA binding proteins, this protein initially binds near the 5'-end of the 23S rRNA. It is important during the early stages of 50S assembly. It makes multiple contacts with different domains of the 23S rRNA in the assembled 50S subunit and ribosome. Forms part of the polypeptide exit tunnel. The chain is Large ribosomal subunit protein uL4 from Clostridium botulinum (strain Okra / Type B1).